We begin with the raw amino-acid sequence, 277 residues long: Putative phosphoenolpyruvate synthase regulatory protein (277 aa).

157-164 (GVSRCGKT) lines the ADP pocket.

It belongs to the pyruvate, phosphate/water dikinase regulatory protein family. PSRP subfamily.

It carries out the reaction [pyruvate, water dikinase] + ADP = [pyruvate, water dikinase]-phosphate + AMP + H(+). The catalysed reaction is [pyruvate, water dikinase]-phosphate + phosphate + H(+) = [pyruvate, water dikinase] + diphosphate. In terms of biological role, bifunctional serine/threonine kinase and phosphorylase involved in the regulation of the phosphoenolpyruvate synthase (PEPS) by catalyzing its phosphorylation/dephosphorylation. This is Putative phosphoenolpyruvate synthase regulatory protein from Erwinia tasmaniensis (strain DSM 17950 / CFBP 7177 / CIP 109463 / NCPPB 4357 / Et1/99).